A 360-amino-acid chain; its full sequence is Histidinol-phosphate aminotransferase (360 aa).

An N6-(pyridoxal phosphate)lysine modification is found at K211.

Belongs to the class-II pyridoxal-phosphate-dependent aminotransferase family. Histidinol-phosphate aminotransferase subfamily. In terms of assembly, homodimer. Pyridoxal 5'-phosphate is required as a cofactor.

The enzyme catalyses L-histidinol phosphate + 2-oxoglutarate = 3-(imidazol-4-yl)-2-oxopropyl phosphate + L-glutamate. It functions in the pathway amino-acid biosynthesis; L-histidine biosynthesis; L-histidine from 5-phospho-alpha-D-ribose 1-diphosphate: step 7/9. The protein is Histidinol-phosphate aminotransferase of Cronobacter sakazakii (strain ATCC BAA-894) (Enterobacter sakazakii).